Consider the following 470-residue polypeptide: Acetyl-CoA decarbonylase/synthase complex subunit gamma 1 (470 aa).

Positions M1 to D60 constitute a 4Fe-4S domain. C18, C21, C26, and C43 together coordinate [4Fe-4S] cluster.

As to quaternary structure, heterodimer of delta and gamma chains. The ACDS complex is made up of alpha, epsilon, beta, gamma and delta chains with a probable stoichiometry of (alpha(2)epsilon(2))(4)-beta(8)-(gamma(1)delta(1))(8). Corrinoid serves as cofactor. [4Fe-4S] cluster is required as a cofactor.

The enzyme catalyses 5,6,7,8-tetrahydrosarcinapterin + methyl-Co(III)-[corrinoid Fe-S protein] = 5-methyltetrahydrosarcinapterin + Co(I)-[corrinoid Fe-S protein] + H(+). It participates in one-carbon metabolism; methanogenesis from acetate. Functionally, part of a complex that catalyzes the reversible cleavage of acetyl-CoA, allowing growth on acetate as sole source of carbon and energy. The chain is Acetyl-CoA decarbonylase/synthase complex subunit gamma 1 from Methanosarcina mazei (strain ATCC BAA-159 / DSM 3647 / Goe1 / Go1 / JCM 11833 / OCM 88) (Methanosarcina frisia).